The chain runs to 368 residues: Putative flavoprotein monooxygenase (368 aa).

Residues alanine 14, glutamate 34, serine 41, 52 to 53 (IT), valine 110, alanine 307, and isoleucine 319 each bind FAD.

The cofactor is FAD.

In terms of biological role, FAD-binding protein that may have monooxygenase activity using NADPH and/or NADH as an electron donor. The chain is Putative flavoprotein monooxygenase from Staphylococcus aureus (strain Mu50 / ATCC 700699).